Here is a 385-residue protein sequence, read N- to C-terminus: Putative non-inhibitory serpin-Z11 (385 aa).

The tract at residues 324–348 is RCL; that stretch reads GTTAVEAMYSPSSPGYSPGYQPPRP.

It belongs to the serpin family.

This chain is Putative non-inhibitory serpin-Z11, found in Oryza sativa subsp. japonica (Rice).